We begin with the raw amino-acid sequence, 98 residues long: NADH-ubiquinone oxidoreductase chain 4L (98 aa).

3 consecutive transmembrane segments (helical) span residues 1-21 (MSMMYFNIFMAFTVSLVGLLM), 29-49 (SLLCLEGMMLSLFVMMSVTIL), and 61-81 (IILLVFAACEAALGLSLLVMV).

This sequence belongs to the complex I subunit 4L family. As to quaternary structure, core subunit of respiratory chain NADH dehydrogenase (Complex I) which is composed of 45 different subunits.

It is found in the mitochondrion inner membrane. The enzyme catalyses a ubiquinone + NADH + 5 H(+)(in) = a ubiquinol + NAD(+) + 4 H(+)(out). In terms of biological role, core subunit of the mitochondrial membrane respiratory chain NADH dehydrogenase (Complex I) which catalyzes electron transfer from NADH through the respiratory chain, using ubiquinone as an electron acceptor. Part of the enzyme membrane arm which is embedded in the lipid bilayer and involved in proton translocation. This chain is NADH-ubiquinone oxidoreductase chain 4L (MT-ND4L), found in Zalophus californianus (California sealion).